The sequence spans 255 residues: Short chain dehydrogenase adrF (255 aa).

5 residues coordinate NADP(+): Ile-11, Arg-118, Tyr-150, Lys-154, and Val-183. Tyr-150 functions as the Proton acceptor in the catalytic mechanism. The active-site Lowers pKa of active site Tyr is Lys-154.

It belongs to the short-chain dehydrogenases/reductases (SDR) family.

Its pathway is secondary metabolite biosynthesis; terpenoid biosynthesis. Short chain dehydrogenase; part of the gene cluster that mediates the biosynthesis of andrastins, meroterpenoid compounds that exhibit inhibitory activity against ras farnesyltransferase, suggesting that they could be promising leads for antitumor agents. The first step of the pathway is the synthesis of 3,5-dimethylorsellinic acid (DMOA) by the polyketide synthase adrD via condensation of one acetyl-CoA starter unit with 3 malonyl-CoA units and 2 methylations. DMAO is then converted to farnesyl-DMAO by the prenyltransferase adrG. The methyltransferase adrK catalyzes the methylation of the carboxyl group of farnesyl-DMAO to farnesyl-DMAO methyl ester which is further converted to epoxyfarnesyl-DMAO methyl ester by the FAD-dependent monooxygenase adrH. The terpene cyclase adrI then catalyzes the carbon skeletal rearrangement to generate the andrastin E, the first compound in the pathway having the andrastin scaffold, with the tetracyclic ring system. The post-cyclization tailoring enzymes adrF, adrE, adrJ, and adrA, are involved in the conversion of andrastin E into andrastin A. The short chain dehydrogenase adrF is responsible for the oxidation of the C-3 a hydroxyl group of andrastin E to yield the corresponding ketone, andrastin D. The ketoreductase adrE stereoselectively reduces the carbonyl moiety to reverse the stereochemistry of the C-3 position to yield andrastin F. The acetyltransferase adrJ is the acetyltransferase that attaches the acetyl group to the C-3 hydroxyl group of andrastin F to yield andrastin C. Finally, the cytochrome P450 monooxygenase adrA catalyzes two sequential oxidation reactions of the C-23 methyl group, to generate the corresponding alcohol andrastin B, and aldehyde andrastin A. The sequence is that of Short chain dehydrogenase adrF from Penicillium rubens (strain ATCC 28089 / DSM 1075 / NRRL 1951 / Wisconsin 54-1255) (Penicillium chrysogenum).